The sequence spans 431 residues: Histidinol dehydrogenase (431 aa).

NAD(+)-binding residues include Y124, Q187, and N210. Substrate is bound by residues S236, Q258, and H261. Zn(2+) is bound by residues Q258 and H261. Catalysis depends on proton acceptor residues E325 and H326. The substrate site is built by H326, D359, E413, and H418. D359 is a Zn(2+) binding site. Zn(2+) is bound at residue H418.

This sequence belongs to the histidinol dehydrogenase family. It depends on Zn(2+) as a cofactor.

The enzyme catalyses L-histidinol + 2 NAD(+) + H2O = L-histidine + 2 NADH + 3 H(+). It participates in amino-acid biosynthesis; L-histidine biosynthesis; L-histidine from 5-phospho-alpha-D-ribose 1-diphosphate: step 9/9. Functionally, catalyzes the sequential NAD-dependent oxidations of L-histidinol to L-histidinaldehyde and then to L-histidine. The polypeptide is Histidinol dehydrogenase (Legionella pneumophila subsp. pneumophila (strain Philadelphia 1 / ATCC 33152 / DSM 7513)).